The sequence spans 145 residues: MQKALKLGSFFARSAISVKPTLATSKMTQLRHFSHGASVFDIDSVEDFTEKVIQSSVPVIVDFHAEWCGPCQALGPRLEEKVNGRQGSVLLAKINVDHAGELAMDYGISAVPTVFAFKNGEKISGFSGVLDDEQLDDFIEDVLAA.

In terms of domain architecture, Thioredoxin spans 39–144 (VFDIDSVEDF…LDDFIEDVLA (106 aa)). Catalysis depends on nucleophile residues Cys-68 and Cys-71. A disulfide bridge links Cys-68 with Cys-71.

Belongs to the thioredoxin family.

In terms of biological role, participates in various redox reactions through the reversible oxidation of its active center dithiol to a disulfide and catalyzes dithiol-disulfide exchange reactions. This chain is Probable thioredoxin-2 (trx-2), found in Caenorhabditis elegans.